A 64-amino-acid polypeptide reads, in one-letter code: Large ribosomal subunit protein bL33c (64 aa).

Belongs to the bacterial ribosomal protein bL33 family.

Its subcellular location is the plastid. It is found in the chloroplast. The sequence is that of Large ribosomal subunit protein bL33c from Thalassiosira pseudonana (Marine diatom).